The following is a 125-amino-acid chain: Probable endoribonuclease HigB1 (125 aa).

It belongs to the mycobacterial HigB family.

Functionally, toxic component of an atypical, type II toxin-antitoxin chaperone (TAC) system. Probably an endoribonuclease, neutralized by its cognate antitoxin HigA which also requires SecB-like chaperone MT2006 (AC Q7D7P7). The chain is Probable endoribonuclease HigB1 from Mycobacterium tuberculosis (strain CDC 1551 / Oshkosh).